Here is a 175-residue protein sequence, read N- to C-terminus: Bifunctional protein PyrR (175 aa).

Positions 97–109 (IVLIDDVLFTGRT) match the PRPP-binding motif.

The protein belongs to the purine/pyrimidine phosphoribosyltransferase family. PyrR subfamily. In terms of assembly, homodimer and homohexamer; in equilibrium.

The catalysed reaction is UMP + diphosphate = 5-phospho-alpha-D-ribose 1-diphosphate + uracil. Its function is as follows. Regulates transcriptional attenuation of the pyrimidine nucleotide (pyr) operon by binding in a uridine-dependent manner to specific sites on pyr mRNA. This disrupts an antiterminator hairpin in the RNA and favors formation of a downstream transcription terminator, leading to a reduced expression of downstream genes. Functionally, also displays a weak uracil phosphoribosyltransferase activity which is not physiologically significant. The chain is Bifunctional protein PyrR from Leuconostoc citreum (strain KM20).